The sequence spans 181 residues: ATP-dependent protease subunit HslV (181 aa).

The active site involves T6. Na(+) contacts are provided by A162, C165, and T168.

This sequence belongs to the peptidase T1B family. HslV subfamily. In terms of assembly, a double ring-shaped homohexamer of HslV is capped on each side by a ring-shaped HslU homohexamer. The assembly of the HslU/HslV complex is dependent on binding of ATP.

It is found in the cytoplasm. The enzyme catalyses ATP-dependent cleavage of peptide bonds with broad specificity.. Its activity is regulated as follows. Allosterically activated by HslU binding. Protease subunit of a proteasome-like degradation complex believed to be a general protein degrading machinery. The protein is ATP-dependent protease subunit HslV of Solidesulfovibrio magneticus (strain ATCC 700980 / DSM 13731 / RS-1) (Desulfovibrio magneticus).